Reading from the N-terminus, the 205-residue chain is uncharacterized protein (205 aa).

The next 4 membrane-spanning stretches (helical) occupy residues 18 to 38, 69 to 89, 106 to 126, and 127 to 147; these read ATVNVIHPISLCLSWFLGTIG, LGIFQHLFYPIIPLLAFCFYA, VVWILAVSRHIVFLENSYYIM, and LLHPHHLHHPHPPFLIFLFLI.

The protein resides in the mitochondrion membrane. This is an uncharacterized protein from Arabidopsis thaliana (Mouse-ear cress).